The chain runs to 129 residues: MVTTLTPVICESAPAAAASYSHAMKVNNLIFLSGQIPVTPDNKLVEGSIADKAEQVIQNIKNVLEASNSSLDRVVKVNIFLADINHFAEFNSVYAKYFNTHKPARSCVAVAALPLGVDMEMEAIAAERD.

Residue K52 forms a Glycyl lysine isopeptide (Lys-Gly) (interchain with G-Cter in ubiquitin) linkage.

The protein belongs to the RutC family.

The protein resides in the cytoplasm. Its subcellular location is the nucleus. It localises to the mitochondrion intermembrane space. This chain is Protein HMF1 (HMF1), found in Saccharomyces cerevisiae (strain ATCC 204508 / S288c) (Baker's yeast).